A 292-amino-acid chain; its full sequence is ATP synthase gamma chain (292 aa).

This sequence belongs to the ATPase gamma chain family. In terms of assembly, F-type ATPases have 2 components, CF(1) - the catalytic core - and CF(0) - the membrane proton channel. CF(1) has five subunits: alpha(3), beta(3), gamma(1), delta(1), epsilon(1). CF(0) has three main subunits: a, b and c.

Its subcellular location is the cell membrane. Its function is as follows. Produces ATP from ADP in the presence of a proton gradient across the membrane. The gamma chain is believed to be important in regulating ATPase activity and the flow of protons through the CF(0) complex. This is ATP synthase gamma chain from Streptococcus suis (strain 05ZYH33).